Consider the following 214-residue polypeptide: Ornithine decarboxylase antizyme 1 (214 aa).

It belongs to the ODC antizyme family. In terms of assembly, interacts with ODC1 and thereby sterically blocks ODC homodimerization.

Its function is as follows. Ornithine decarboxylase (ODC) antizyme protein that negatively regulates ODC activity and intracellular polyamine biosynthesis and uptake in response to increased intracellular polyamine levels. Binds to ODC monomers, inhibiting the assembly of the functional ODC homodimer, and targets the monomers for ubiquitin-independent proteolytic destruction by the 26S proteasome. This chain is Ornithine decarboxylase antizyme 1 (oaz1a), found in Danio rerio (Zebrafish).